A 388-amino-acid polypeptide reads, in one-letter code: Pepsin A-5 (388 aa).

Residues 1-15 form the signal peptide; the sequence is MKWLLLLGLVALSEC. A propeptide spans 16 to 62 (activation peptide); sequence IMYKVPLIRKKSLRRTLSERGLLKDFLKKHNLNPARKYFPQWEAPTL. Residues 76–385 enclose the Peptidase A1 domain; the sequence is YFGTIGIGTP…DRANNQVGLA (310 aa). The active site involves aspartate 94. An intrachain disulfide couples cysteine 107 to cysteine 112. Serine 130 carries the phosphoserine modification. The cysteines at positions 268 and 272 are disulfide-linked. The active site involves aspartate 277. Cysteine 311 and cysteine 344 are disulfide-bonded.

It belongs to the peptidase A1 family.

It localises to the secreted. The enzyme catalyses Preferential cleavage: hydrophobic, preferably aromatic, residues in P1 and P1' positions. Cleaves 1-Phe-|-Val-2, 4-Gln-|-His-5, 13-Glu-|-Ala-14, 14-Ala-|-Leu-15, 15-Leu-|-Tyr-16, 16-Tyr-|-Leu-17, 23-Gly-|-Phe-24, 24-Phe-|-Phe-25 and 25-Phe-|-Tyr-26 bonds in the B chain of insulin.. In terms of biological role, shows particularly broad specificity; although bonds involving phenylalanine and leucine are preferred, many others are also cleaved to some extent. This Homo sapiens (Human) protein is Pepsin A-5 (PGA5).